Reading from the N-terminus, the 426-residue chain is Gamma-glutamyl phosphate reductase (426 aa).

Belongs to the gamma-glutamyl phosphate reductase family.

It is found in the cytoplasm. The catalysed reaction is L-glutamate 5-semialdehyde + phosphate + NADP(+) = L-glutamyl 5-phosphate + NADPH + H(+). Its pathway is amino-acid biosynthesis; L-proline biosynthesis; L-glutamate 5-semialdehyde from L-glutamate: step 2/2. In terms of biological role, catalyzes the NADPH-dependent reduction of L-glutamate 5-phosphate into L-glutamate 5-semialdehyde and phosphate. The product spontaneously undergoes cyclization to form 1-pyrroline-5-carboxylate. In Sorangium cellulosum (strain So ce56) (Polyangium cellulosum (strain So ce56)), this protein is Gamma-glutamyl phosphate reductase.